The primary structure comprises 442 residues: D-serine dehydratase (442 aa).

Lysine 118 carries the N6-(pyridoxal phosphate)lysine modification.

It belongs to the serine/threonine dehydratase family. DsdA subfamily. As to quaternary structure, monomer. The cofactor is pyridoxal 5'-phosphate.

It catalyses the reaction D-serine = pyruvate + NH4(+). In Shigella flexneri serotype 5b (strain 8401), this protein is D-serine dehydratase.